Here is a 277-residue protein sequence, read N- to C-terminus: Glutamate racemase (277 aa).

Substrate-binding positions include D25–S26 and Y57–G58. C89 (proton donor/acceptor) is an active-site residue. Substrate is bound at residue N90–T91. C204 acts as the Proton donor/acceptor in catalysis. T205–H206 lines the substrate pocket.

This sequence belongs to the aspartate/glutamate racemases family.

It carries out the reaction L-glutamate = D-glutamate. Its pathway is cell wall biogenesis; peptidoglycan biosynthesis. Its function is as follows. Provides the (R)-glutamate required for cell wall biosynthesis. This chain is Glutamate racemase, found in Brucella ovis (strain ATCC 25840 / 63/290 / NCTC 10512).